Reading from the N-terminus, the 89-residue chain is Small ribosomal subunit protein uS15 (89 aa).

This sequence belongs to the universal ribosomal protein uS15 family. Part of the 30S ribosomal subunit. Forms a bridge to the 50S subunit in the 70S ribosome, contacting the 23S rRNA.

One of the primary rRNA binding proteins, it binds directly to 16S rRNA where it helps nucleate assembly of the platform of the 30S subunit by binding and bridging several RNA helices of the 16S rRNA. In terms of biological role, forms an intersubunit bridge (bridge B4) with the 23S rRNA of the 50S subunit in the ribosome. The chain is Small ribosomal subunit protein uS15 from Synechococcus elongatus (strain ATCC 33912 / PCC 7942 / FACHB-805) (Anacystis nidulans R2).